The chain runs to 197 residues: Large ribosomal subunit protein uL10 (197 aa).

A disordered region spans residues 162-197 (GGASAPAAEEAPAAEEAAAEEVAAPAEAAEAATEEN). The span at 163 to 197 (GASAPAAEEAPAAEEAAAEEVAAPAEAAEAATEEN) shows a compositional bias: low complexity.

Belongs to the universal ribosomal protein uL10 family. Part of the ribosomal stalk of the 50S ribosomal subunit. The N-terminus interacts with L11 and the large rRNA to form the base of the stalk. The C-terminus forms an elongated spine to which L12 dimers bind in a sequential fashion forming a multimeric L10(L12)X complex.

In terms of biological role, forms part of the ribosomal stalk, playing a central role in the interaction of the ribosome with GTP-bound translation factors. The protein is Large ribosomal subunit protein uL10 of Paenarthrobacter aurescens (strain TC1).